Consider the following 693-residue polypeptide: Testis-specific Y-encoded-like protein 2 (693 aa).

Disordered regions lie at residues 1–56 (MDRP…EAAQ) and 104–125 (GYGE…EASG). Lys11 is covalently cross-linked (Glycyl lysine isopeptide (Lys-Gly) (interchain with G-Cter in SUMO2)). Ser18 and Ser20 each carry phosphoserine. Positions 23–44 (RDPPPPPPPPPLLRLPLPPPQQ) are enriched in pro residues. Residues Lys163 and Lys165 each participate in a glycyl lysine isopeptide (Lys-Gly) (interchain with G-Cter in SUMO2) cross-link. A disordered region spans residues 175-207 (EDEDERESMRSSRRRRRRRRRKQRKVKRESRER). Residues 185 to 202 (SSRRRRRRRRRKQRKVKR) are compositionally biased toward basic residues. Thr340 bears the Phosphothreonine mark. 2 disordered regions span residues 474 to 605 (ENIC…DIEY) and 627 to 693 (ISDE…GKTG). Residues 487-496 (VPNNETTDNN) show a composition bias toward polar residues. Residues 509–519 (ESADDNNENPE) are compositionally biased toward acidic residues. Residues 531-542 (NPNNNENTYGNN) show a composition bias toward low complexity. Composition is skewed to acidic residues over residues 559 to 602 (SDSD…DDRD) and 627 to 675 (ISDE…DLED). Phosphoserine occurs at positions 658, 668, and 671.

Belongs to the nucleosome assembly protein (NAP) family. In terms of assembly, interacts with histones. Interacts with CASK. Part of a complex containing CASK, TBR1 and TSPYL2. In terms of processing, phosphorylation at Ser-20 and/or Thr-340 impairs function on cell proliferation. Ubiquitously expressed, with highest levels in brain, testis and heart, and lowest levels in liver and pancreas.

The protein resides in the nucleus. The protein localises to the cytoplasm. Part of the CASK/TBR1/TSPYL2 transcriptional complex which modulates gene expression in response to neuronal synaptic activity, probably by facilitating nucleosome assembly. May inhibit cell proliferation by inducing p53-dependent CDKN1A expression. This chain is Testis-specific Y-encoded-like protein 2 (TSPYL2), found in Homo sapiens (Human).